We begin with the raw amino-acid sequence, 317 residues long: DNA repair nuclease/redox regulator APEX1 (317 aa).

A disordered region spans residues 1 to 58 (MPKRGKKAAADDGEEPKSEPETKKSKGAAKKTEKEAAGEGPVLYEDPPDQKTSPSGKS). The segment at 2–32 (PKRGKKAAADDGEEPKSEPETKKSKGAAKKT) is necessary for interaction with YBX1, binding to RNA, association together with NPM1 to rRNA, endoribonuclease activity on abasic RNA and localization in the nucleoli. An N6-acetyllysine; by EP300 mark is found at lysine 6 and lysine 7. Residues 8 to 12 (AAADD) carry the Nuclear localization signal (NLS) motif. The span at 15–37 (EPKSEPETKKSKGAAKKTEKEAA) shows a compositional bias: basic and acidic residues. Serine 18 bears the Phosphoserine mark. Positions 22 to 32 (TKKSKGAAKKT) are necessary for interaction with NPM1 and for efficient rRNA binding. N6-acetyllysine is present on residues lysine 26, lysine 30, lysine 31, and lysine 34. Serine 53 bears the Phosphoserine mark. The Nuclear export signal (NES) motif lies at 63–79 (ICSWNVDGLRAWIKKKG). The residue at position 64 (cysteine 64) is an S-nitrosocysteine; alternate. Cysteine 64 and cysteine 92 are disulfide-bonded. Aspartate 69 is a binding site for Mg(2+). Cysteine 92 is subject to S-nitrosocysteine; alternate. Position 95 (glutamate 95) interacts with Mg(2+). Residue tyrosine 170 is part of the active site. The residue at position 196 (lysine 196) is an N6-acetyllysine. Mg(2+) contacts are provided by aspartate 209 and asparagine 211. Aspartate 209 (proton donor/acceptor) is an active-site residue. Position 232 is a phosphothreonine; by CDK5 (threonine 232). Residues 288-317 (HSLLPALCDSKIRSKALGSDHCPITLYLAL) form a mitochondrial targeting sequence (MTS) region. Aspartate 307 contacts Mg(2+). S-nitrosocysteine is present on cysteine 309.

Belongs to the DNA repair enzymes AP/ExoA family. Monomer. Homodimer; disulfide-linked. Component of the SET complex, composed of at least APEX1, SET, ANP32A, HMGB2, NME1 and TREX1. Associates with the dimer XRCC5/XRCC6 in a DNA-dependent manner. Interacts with SIRT1; the interaction is increased in the context of genotoxic stress. Interacts with HDAC1, HDAC2 and HDAC3; the interactions are not dependent on the APEX1 acetylation status. Interacts with XRCC1; the interaction is induced by SIRT1 and increased with the APEX1 acetylated form. Interacts with NPM1 (via N-terminal domain); the interaction is RNA-dependent and decreases in hydrogen peroxide-damaged cells. Interacts (via N-terminus) with YBX1 (via C-terminus); the interaction is increased in presence of APEX1 acetylated at Lys-6 and Lys-7. Interacts with HNRNPL; the interaction is DNA-dependent. Interacts (via N-terminus) with KPNA1 and KPNA2. Interacts with TXN; the interaction stimulates the FOS/JUN AP-1 complex DNA-binding activity in a redox-dependent manner. Interacts with GZMA, KRT8, MDM2, POLB, PRDX6, PRPF19, RPLP0, TOMM20 and WDR77. Binds to CDK5. It depends on Mg(2+) as a cofactor. Requires Mn(2+) as cofactor. Phosphorylated. Phosphorylation by kinase PKC or casein kinase CK2 results in enhanced redox activity that stimulates binding of the FOS/JUN AP-1 complex to its cognate binding site. AP-endodeoxyribonuclease activity is not affected by CK2-mediated phosphorylation. Phosphorylation of Thr-232 by CDK5 in response to MPP(+)/MPTP (1-methyl-4-phenylpyridinium) reduces AP-endodeoxyribonuclease activity resulting in accumulation of DNA damage and contributing to neuronal death. In terms of processing, acetylated on Lys-6 and Lys-7. Acetylation is increased by the transcriptional coactivator EP300 acetyltransferase, genotoxic agents like H(2)O(2) and methyl methanesulfonate (MMS). Acetylation increases its binding affinity to the negative calcium response element (nCaRE) DNA promoter. The acetylated form induces a stronger binding of YBX1 to the Y-box sequence in the MDR1 promoter than the unacetylated form. Deacetylated on lysines. Lys-6 and Lys-7 are deacetylated by SIRT1. Post-translationally, cleaved at Lys-30 by granzyme A to create the mitochondrial form; leading in reduction of binding to DNA, AP endodeoxyribonuclease activity, redox activation of transcription factors and to enhanced cell death. Cleaved by granzyme K; leading to intracellular ROS accumulation and enhanced cell death after oxidative stress. Cys-64 and Cys-92 are nitrosylated in response to nitric oxide (NO) and lead to the exposure of the nuclear export signal (NES). In terms of processing, ubiquitinated by MDM2; leading to translocation to the cytoplasm and proteasomal degradation. As to expression, expressed in both resting and stimulated B cells stimulated to switch (at protein level).

Its subcellular location is the nucleus. It localises to the nucleolus. The protein localises to the nucleus speckle. It is found in the endoplasmic reticulum. The protein resides in the cytoplasm. Its subcellular location is the mitochondrion. It carries out the reaction a deoxyribonucleotide-2'-deoxyribose-5'-monophosphate-DNA + H2O = a 5'-end 2'-deoxyribose-5'-monophosphate-DNA + a 3'-end 2'-deoxyribonucleotide-DNA + H(+). It catalyses the reaction Exonucleolytic cleavage in the 3'- to 5'-direction to yield nucleoside 5'-phosphates.. The enzyme catalyses a 3'-end 2'-deoxyribonucleotide-3'-phosphoglycolate-DNA + H2O = 2-phosphoglycolate + a 3'-end 2'-deoxyribonucleotide-DNA + H(+). The catalysed reaction is a 3'-end 2'-deoxyribonucleotide-8-oxoguanine-DNA + H2O = 8-oxo-dGMP + a 3'-end 2'-deoxyribonucleotide-DNA + H(+). Its activity is regulated as follows. NPM1 stimulates endodeoxyribonuclease activity on double-stranded DNA with AP sites, but inhibits endoribonuclease activity on single-stranded RNA containing AP sites. Its function is as follows. Multifunctional protein that plays a central role in the cellular response to oxidative stress. The two major activities of APEX1 are DNA repair and redox regulation of transcriptional factors. Functions as an apurinic/apyrimidinic (AP) endodeoxyribonuclease in the base excision repair (BER) pathway of DNA lesions induced by oxidative and alkylating agents. Initiates repair of AP sites in DNA by catalyzing hydrolytic incision of the phosphodiester backbone immediately adjacent to the damage, generating a single-strand break with 5'-deoxyribose phosphate and 3'-hydroxyl ends. Also incises at AP sites in the DNA strand of DNA/RNA hybrids, single-stranded DNA regions of R-loop structures, and single-stranded RNA molecules. Operates at switch sites of immunoglobulin (Ig) constant regions where it mediates Ig isotype class switch recombination. Processes AP sites induced by successive action of AICDA and UNG. Generates staggered nicks in opposite DNA strands resulting in the formation of double-strand DNA breaks that are finally resolved via non-homologous end joining repair pathway. Has 3'-5' exodeoxyribonuclease activity on mismatched deoxyribonucleotides at the 3' termini of nicked or gapped DNA molecules during short-patch BER. Possesses DNA 3' phosphodiesterase activity capable of removing lesions (such as phosphoglycolate and 8-oxoguanine) blocking the 3' side of DNA strand breaks. Also acts as an endoribonuclease involved in the control of single-stranded RNA metabolism. Plays a role in regulating MYC mRNA turnover by preferentially cleaving in between UA and CA dinucleotides of the MYC coding region determinant (CRD). In association with NMD1, plays a role in the rRNA quality control process during cell cycle progression. Acts as a loading factor for POLB onto non-incised AP sites in DNA and stimulates the 5'-terminal deoxyribose 5'-phosphate (dRp) excision activity of POLB. Exerts reversible nuclear redox activity to regulate DNA binding affinity and transcriptional activity of transcriptional factors by controlling the redox status of their DNA-binding domain, such as the FOS/JUN AP-1 complex after exposure to IR. Involved in calcium-dependent down-regulation of parathyroid hormone (PTH) expression by binding to negative calcium response elements (nCaREs). Together with HNRNPL or the dimer XRCC5/XRCC6, associates with nCaRE, acting as an activator of transcriptional repression. May also play a role in the epigenetic regulation of gene expression by participating in DNA demethylation. Stimulates the YBX1-mediated MDR1 promoter activity, when acetylated at Lys-6 and Lys-7, leading to drug resistance. Plays a role in protection from granzyme-mediated cellular repair leading to cell death. Binds DNA and RNA. Associates, together with YBX1, on the MDR1 promoter. Together with NPM1, associates with rRNA. The protein is DNA repair nuclease/redox regulator APEX1 (Apex1) of Mus musculus (Mouse).